The chain runs to 493 residues: Glutamyl-tRNA(Gln) amidotransferase subunit A (493 aa).

Active-site charge relay system residues include K79 and S159. S183 (acyl-ester intermediate) is an active-site residue.

This sequence belongs to the amidase family. GatA subfamily. Heterotrimer of A, B and C subunits.

The enzyme catalyses L-glutamyl-tRNA(Gln) + L-glutamine + ATP + H2O = L-glutaminyl-tRNA(Gln) + L-glutamate + ADP + phosphate + H(+). Its function is as follows. Allows the formation of correctly charged Gln-tRNA(Gln) through the transamidation of misacylated Glu-tRNA(Gln) in organisms which lack glutaminyl-tRNA synthetase. The reaction takes place in the presence of glutamine and ATP through an activated gamma-phospho-Glu-tRNA(Gln). The chain is Glutamyl-tRNA(Gln) amidotransferase subunit A from Agrobacterium fabrum (strain C58 / ATCC 33970) (Agrobacterium tumefaciens (strain C58)).